The chain runs to 84 residues: uncharacterized protein (84 aa).

Residues 1–21 (MYYRRQGEPQEMYGNGNNSVS) are disordered. Residues 49–69 (YIIYAIVAAILLLLFWLLYKK) traverse the membrane as a helical segment.

The protein localises to the membrane. This is an uncharacterized protein from Invertebrate iridescent virus 6 (IIV-6).